The sequence spans 112 residues: ATP synthase epsilon chain (112 aa).

The protein belongs to the ATPase epsilon chain family. In terms of assembly, F-type ATPases have 2 components, CF(1) - the catalytic core - and CF(0) - the membrane proton channel. CF(1) has five subunits: alpha(3), beta(3), gamma(1), delta(1), epsilon(1). CF(0) has three main subunits: a, b and c.

It is found in the cell inner membrane. In terms of biological role, produces ATP from ADP in the presence of a proton gradient across the membrane. In Rickettsia peacockii (strain Rustic), this protein is ATP synthase epsilon chain.